A 418-amino-acid polypeptide reads, in one-letter code: UDP-N-acetylglucosamine 1-carboxyvinyltransferase 2 (418 aa).

Position 22–23 (22–23 (KN)) interacts with phosphoenolpyruvate. Arginine 93 lines the UDP-N-acetyl-alpha-D-glucosamine pocket. The Proton donor role is filled by cysteine 117. Cysteine 117 carries the 2-(S-cysteinyl)pyruvic acid O-phosphothioketal modification. UDP-N-acetyl-alpha-D-glucosamine-binding positions include 122 to 126 (RPIDQ), aspartate 305, and isoleucine 327.

This sequence belongs to the EPSP synthase family. MurA subfamily.

The protein localises to the cytoplasm. The catalysed reaction is phosphoenolpyruvate + UDP-N-acetyl-alpha-D-glucosamine = UDP-N-acetyl-3-O-(1-carboxyvinyl)-alpha-D-glucosamine + phosphate. It functions in the pathway cell wall biogenesis; peptidoglycan biosynthesis. Its function is as follows. Cell wall formation. Adds enolpyruvyl to UDP-N-acetylglucosamine. This Clostridium acetobutylicum (strain ATCC 824 / DSM 792 / JCM 1419 / IAM 19013 / LMG 5710 / NBRC 13948 / NRRL B-527 / VKM B-1787 / 2291 / W) protein is UDP-N-acetylglucosamine 1-carboxyvinyltransferase 2.